The sequence spans 227 residues: 7-cyano-7-deazaguanine synthase (227 aa).

9-19 (LSGGLDSATVL) provides a ligand contact to ATP. Zn(2+) is bound by residues Cys-189, Cys-199, Cys-202, and Cys-205.

The protein belongs to the QueC family. It depends on Zn(2+) as a cofactor.

It carries out the reaction 7-carboxy-7-deazaguanine + NH4(+) + ATP = 7-cyano-7-deazaguanine + ADP + phosphate + H2O + H(+). It participates in purine metabolism; 7-cyano-7-deazaguanine biosynthesis. Its function is as follows. Catalyzes the ATP-dependent conversion of 7-carboxy-7-deazaguanine (CDG) to 7-cyano-7-deazaguanine (preQ(0)). This chain is 7-cyano-7-deazaguanine synthase, found in Cupriavidus taiwanensis (strain DSM 17343 / BCRC 17206 / CCUG 44338 / CIP 107171 / LMG 19424 / R1) (Ralstonia taiwanensis (strain LMG 19424)).